A 247-amino-acid polypeptide reads, in one-letter code: 1-(5-phosphoribosyl)-5-[(5-phosphoribosylamino)methylideneamino] imidazole-4-carboxamide isomerase (247 aa).

Asp8 serves as the catalytic Proton acceptor. Asp131 functions as the Proton donor in the catalytic mechanism.

It belongs to the HisA/HisF family.

Its subcellular location is the cytoplasm. The enzyme catalyses 1-(5-phospho-beta-D-ribosyl)-5-[(5-phospho-beta-D-ribosylamino)methylideneamino]imidazole-4-carboxamide = 5-[(5-phospho-1-deoxy-D-ribulos-1-ylimino)methylamino]-1-(5-phospho-beta-D-ribosyl)imidazole-4-carboxamide. The protein operates within amino-acid biosynthesis; L-histidine biosynthesis; L-histidine from 5-phospho-alpha-D-ribose 1-diphosphate: step 4/9. The sequence is that of 1-(5-phosphoribosyl)-5-[(5-phosphoribosylamino)methylideneamino] imidazole-4-carboxamide isomerase from Cupriavidus metallidurans (strain ATCC 43123 / DSM 2839 / NBRC 102507 / CH34) (Ralstonia metallidurans).